Here is a 252-residue protein sequence, read N- to C-terminus: 5'-nucleotidase SurE (252 aa).

Asp8, Asp9, Ser39, and Asn91 together coordinate a divalent metal cation.

Belongs to the SurE nucleotidase family. Requires a divalent metal cation as cofactor.

The protein resides in the cytoplasm. The enzyme catalyses a ribonucleoside 5'-phosphate + H2O = a ribonucleoside + phosphate. Functionally, nucleotidase that shows phosphatase activity on nucleoside 5'-monophosphates. The chain is 5'-nucleotidase SurE from Bordetella pertussis (strain Tohama I / ATCC BAA-589 / NCTC 13251).